A 920-amino-acid polypeptide reads, in one-letter code: Dynamin-2B (920 aa).

Residue Met-1 is modified to N-acetylmethionine. In terms of domain architecture, Dynamin-type G spans 35–303 (PATSLNVVAL…IRSRMKLRLP (269 aa)). Residues 45–52 (GNVGAGKS) form a G1 motif region. Residue 45–53 (GNVGAGKSA) coordinates GTP. The segment at 71–73 (ATR) is G2 motif. The tract at residues 143–146 (DLPG) is G3 motif. The interval 204 to 207 (SKID) is G4 motif. 204-210 (SKIDQAA) serves as a coordination point for GTP. The tract at residues 238–241 (ALIG) is G5 motif. Residue 246–249 (IASA) participates in GTP binding. The span at 507–522 (RREEELKGRSSKKGQD) shows a compositional bias: basic and acidic residues. Disordered regions lie at residues 507 to 577 (RREE…TAGP) and 632 to 657 (IEEI…PDSK). The segment covering 523–545 (AEQSLLNRATSPQPDGPSSTGGS) has biased composition (polar residues). Composition is skewed to basic and acidic residues over residues 548–567 (SLRD…KETP) and 641–652 (EKSKSSKDKKSN). Residues 579-703 (GEITAGYLMK…WINKLQKVIQ (125 aa)) enclose the PH domain. The region spanning 737-830 (LRWMSQEVRG…QLSIHDNRAA (94 aa)) is the GED domain. Residues 747 to 761 (YVEAVLNSLAANVPK) are important for homodimerization. Positions 788-812 (NERIESLIQEDQNVKRRRDRYQKQS) form a coiled coil. Residues 828–920 (RAAAASSWSD…PPQSGSSYRY (93 aa)) are disordered. Polar residues predominate over residues 833–849 (SSWSDNSGTESSPRTNG).

This sequence belongs to the TRAFAC class dynamin-like GTPase superfamily. Dynamin/Fzo/YdjA family. Interacts with DRP1A at the plasma membrane and in forming clathrin-coated vesicles (CCV). As to expression, ubiquitous. Preferentially expressed in siliques.

The protein localises to the cytoplasm. It localises to the cytoskeleton. Its subcellular location is the cytoplasmic vesicle. It is found in the clathrin-coated vesicle. The protein resides in the cell membrane. The catalysed reaction is GTP + H2O = GDP + phosphate + H(+). Functionally, putative microtubule-associated force-producing protein, able to bind and hydrolyze GTP. Collaboratively with DRP1A, participates in clathrin-coated vesicle formation during endocytosis. With DRP1A and PIP5K3, required for the precise coordination of polar ARAC3/ROP6 and ARAC4/ROP2 placement and subsequent root hair positioning during planar polarity formation in root hair-forming cells. The polypeptide is Dynamin-2B (Arabidopsis thaliana (Mouse-ear cress)).